Here is a 90-residue protein sequence, read N- to C-terminus: Bombyxin G-1 (90 aa).

Positions 1 to 19 (MKLIIFVVFCITIYGSTSG) are cleaved as a signal peptide. Intrachain disulfides connect C28–C77, C40–C90, and C76–C81. A propeptide spans 49–67 (NTQYEGYHWPLLAYSEERI) (c peptide like).

This sequence belongs to the insulin family. Heterodimer of a B chain and an A chain linked by two disulfide bonds.

It is found in the secreted. The protein is Bombyxin G-1 (BBXG1) of Bombyx mori (Silk moth).